Consider the following 90-residue polypeptide: Acylphosphatase (90 aa).

The region spanning 3-90 is the Acylphosphatase-like domain; the sequence is QYHMIADGRV…KGYRTFSISY (88 aa). Catalysis depends on residues Arg18 and Asn36.

It belongs to the acylphosphatase family.

It carries out the reaction an acyl phosphate + H2O = a carboxylate + phosphate + H(+). This chain is Acylphosphatase (acyP), found in Bacillus velezensis (strain DSM 23117 / BGSC 10A6 / LMG 26770 / FZB42) (Bacillus amyloliquefaciens subsp. plantarum).